The sequence spans 493 residues: Solute carrier family 2, facilitated glucose transporter member 3 (493 aa).

Topologically, residues 1 to 10 (MGTTKVTPSL) are cytoplasmic. The chain crosses the membrane as a helical span at residues 11–32 (VFAVTVATIGSFQFGYNTGVIN). Residues 33–64 (APETILKDFLNYTLEERLEDLPSEGLLTALWS) are Extracellular-facing. N43 carries N-linked (GlcNAc...) asparagine glycosylation. Residues 65 to 85 (LCVAIFSVGGMIGSFSVGLFV) form a helical membrane-spanning segment. Over 86 to 90 (NRFGR) the chain is Cytoplasmic. A helical transmembrane segment spans residues 91-111 (RNSMLLVNLLAIIAGCLMGFA). Topologically, residues 112–118 (KIAESVE) are extracellular. A helical membrane pass occupies residues 119–142 (MLILGRLLIGIFCGLCTGFVPMYI). The Cytoplasmic segment spans residues 143-153 (GEVSPTALRGA). A helical transmembrane segment spans residues 154–174 (FGTLNQLGIVVGILVAQIFGL). Residue Q159 coordinates D-glucose. At 175-183 (DFILGSEEL) the chain is on the extracellular side. A helical membrane pass occupies residues 184–204 (WPGLLGLTIIPAILQSAALPF). The Cytoplasmic portion of the chain corresponds to 205–269 (CPESPRFLLI…LFRSPNYVQP (65 aa)). Residue T232 is modified to Phosphothreonine. Residues 270–290 (LLISIVLQLSQQLSGINAVFY) traverse the membrane as a helical segment. Residues 277–279 (QLS) are important for selectivity against fructose. D-glucose contacts are provided by residues 280–281 (QQ) and N286. At 291–304 (YSTGIFKDAGVQEP) the chain is on the extracellular side. A helical membrane pass occupies residues 305–325 (IYATIGAGVVNTIFTVVSLFL). Position 315 (N315) interacts with D-glucose. Residues 326–331 (VERAGR) lie on the Cytoplasmic side of the membrane. Residues 332 to 352 (RTLHMIGLGGMAVCSVFMTIS) traverse the membrane as a helical segment. At 353 to 363 (LLLKDDYEAMS) the chain is on the extracellular side. The helical transmembrane segment at 364–389 (FVCIVAILIYVAFFEIGPGPIPWFIV) threads the bilayer. 2 residues coordinate D-glucose: E378 and W386. Residues 390–399 (AELFSQGPRP) are Cytoplasmic-facing. The helical transmembrane segment at 400 to 420 (AAIAVAGCCNWTSNFLVGMLF) threads the bilayer. Residues 421–429 (PSAAAYLGA) are Extracellular-facing. A helical membrane pass occupies residues 430–450 (YVFIIFAAFLIFFLIFTFFKV). The Cytoplasmic portion of the chain corresponds to 451–493 (PETKGRTFEDIARAFEGQAHSGKGPAGVELNSMQPVKETPGNA). The segment at 469 to 493 (AHSGKGPAGVELNSMQPVKETPGNA) is disordered. 2 positions are modified to phosphoserine: S471 and S482. The residue at position 489 (T489) is a Phosphothreonine.

The protein belongs to the major facilitator superfamily. Sugar transporter (TC 2.A.1.1) family. Glucose transporter subfamily. In terms of assembly, interacts with SMIM43; the interaction may promote SLC2A3-mediated glucose transport to meet the energy needs of mesendoderm differentiation. Expressed in spermatozoa (at protein level). Detected in brain (at protein level). Abundantly expressed in the hippocampus, cerebellum and cerebral cortex with lower expression in the dentate gyrus and piriform cortex.

It is found in the cell membrane. It localises to the perikaryon. The protein localises to the cell projection. It carries out the reaction D-glucose(out) = D-glucose(in). It catalyses the reaction D-galactose(in) = D-galactose(out). Deoxyglucose transport is inhibited by D-glucose, D-galactose and maltose. Galactose transport is inhibited by D-glucose and maltose. Its function is as follows. Facilitative glucose transporter. Can also mediate the uptake of various other monosaccharides across the cell membrane. Mediates the uptake of glucose, 2-deoxyglucose, galactose, mannose, xylose and fucose, and probably also dehydroascorbate. Does not mediate fructose transport. Required for mesendoderm differentiation. The polypeptide is Solute carrier family 2, facilitated glucose transporter member 3 (Mus musculus (Mouse)).